Here is a 738-residue protein sequence, read N- to C-terminus: Prolyl oligopeptidase A (738 aa).

Active-site charge relay system residues include S581, D665, and H701.

The protein belongs to the peptidase S9A family. Monomer.

It carries out the reaction Hydrolysis of Pro-|-Xaa &gt;&gt; Ala-|-Xaa in oligopeptides.. Its function is as follows. Housekeeping prolyl oligopeptidase (POP) that behaves like a conventional POP by cleaving peptide bonds on the C-terminal side of prolyl residues within peptides that are up to approximately 30 amino acids long. This is Prolyl oligopeptidase A from Galerina marginata (strain CBS 339.88).